A 536-amino-acid polypeptide reads, in one-letter code: uncharacterized protein (536 aa).

Disordered stretches follow at residues 1 to 76 and 204 to 237; these read MSFT…SPAS and NWNS…SNKS. 2 stretches are compositionally biased toward low complexity: residues 7–76 and 204–234; these read TSSV…SPAS and NWNS…PSKS. The chain crosses the membrane as a helical span at residues 247–267; it reads CSVAIPVGVVLILIGLGIFLW. Disordered regions lie at residues 287–354 and 373–536; these read YGFN…LLGG and DASD…LNLF. The segment covering 290-326 has biased composition (polar residues); sequence NPNQPSNFRSPNRAPSTNNRYRGWNGSPTPAAGNNTN. Residues 327–350 are compositionally biased toward low complexity; it reads GRPVAPRPSAGAGGANPPAASQPG. Residues 351–371 traverse the membrane as a helical segment; that stretch reads LLGGSSNSAGPIAAATAAGVG. Positions 403-424 are enriched in polar residues; the sequence is SASNEAEATMPPSNGSNFSEGL. Positions 430–454 are enriched in low complexity; the sequence is ESGPAVGAAGAAAEAAEHSGSGSDS. Over residues 480-509 the composition is skewed to polar residues; sequence SYGSRAALSSRSQSNLLSPTSTGASNQPNY. The segment covering 517–527 has biased composition (low complexity); that stretch reads SSSNVSIPRSS.

It localises to the membrane. This is an uncharacterized protein from Schizosaccharomyces pombe (strain 972 / ATCC 24843) (Fission yeast).